The following is a 361-amino-acid chain: 3-dehydroquinate synthase (361 aa).

NAD(+)-binding positions include 71 to 76 (DGEQFK), 105 to 109 (GVIGD), 129 to 130 (TT), Lys142, Lys151, and 169 to 172 (CLQT). 3 residues coordinate Zn(2+): Glu184, His247, and His264.

This sequence belongs to the sugar phosphate cyclases superfamily. Dehydroquinate synthase family. Requires Co(2+) as cofactor. It depends on Zn(2+) as a cofactor. The cofactor is NAD(+).

The protein resides in the cytoplasm. It carries out the reaction 7-phospho-2-dehydro-3-deoxy-D-arabino-heptonate = 3-dehydroquinate + phosphate. It functions in the pathway metabolic intermediate biosynthesis; chorismate biosynthesis; chorismate from D-erythrose 4-phosphate and phosphoenolpyruvate: step 2/7. Functionally, catalyzes the conversion of 3-deoxy-D-arabino-heptulosonate 7-phosphate (DAHP) to dehydroquinate (DHQ). The sequence is that of 3-dehydroquinate synthase from Edwardsiella ictaluri (strain 93-146).